Reading from the N-terminus, the 1555-residue chain is MAPPQEEGGGNGTELSMQRSRWATRRLTVKSGARKRLSLMTRAQAKNSATEKRQSGVTDDGSPAADGDQKEGSISSSNNGGSAPRKLYFNLPLPPELKDEEGHPIQQFPRNKIRTAKYTPLSFIPKNLWFQFHNIANIFFLFLVILVIFPIFGGVNPGLNSVPLIVIITVTAIKDAIEDYRRTILDIELNNAPVHRLQGWENVNVEKDNVSLWRRFKKANSRFFGSIWHLIERLWKEDAQSMRQRFASADPRMSIETRTAPWDPSHRRSVASHTEEIQMTPVPSPVPHDPDVPTVSSAIENEATLLQNLKGDLINHEIPVSGKARFHKDAWKNLVVGDFVRIYNDDELPADIIILATSDPDGACYVETKNLDGETNLKVRQALRCGRTLKHARDCERAQFVIESEPPQPNLYKYNGAIRWKQRVPWDPHGEPREMSEPIGIDNLLLRGCHLRNTEWALGVVVFTGHDTKIMMNAGITPSKRARIARELNFNVICNFGILLIMCLIAAIANGIAWGKTDASLAWFEYGSIGGTPALTGFITFWAAVIVFQNLVPISLYISLEIVRTLQAFFIYSDVGMYYEKIDQPCIPKSWNISDDVGQIEYIFSDKTGTLTQNVMEFKKATINGQPYGEAYTEAQAGMDRRRGINVEEEAKVIREEIAAAKVRAIRGLRELHDNPYLHDEDMTFIAPDFVEDLAGKNGPEQQQATEHFMLALALCHTVVAEKQPGDPPKMIFKAQSPDEAALVATARDMGFTVLGMSDGGINVNVMGKDMHFPVLSIIEFNSSRKRMSTIVRMPDGRILLFCKGADSVIYSRLKKGEQADMRRETAQHLEMFAVEGLRTLCIAERELSEEEYREWRREHDLAATALENREEKLEEVADKIERDLTLLGGTAIEDRLQDGVPDTIALLADAGIKLWVLTGDKVETAINIGFSCNLLNNDMDLLRLQVNESDASTEDDYLQLAEEQLKTNLERFNMTGDDEELKRARKDHNAPSPTYALVIDGFTLRWVLSDSLKQKFLLLCKQCKSVLCCRVSPAQKAAVVSMVKNGLDVMTLSIGDGANDVAMIQEADVGVGIAGEEGRQAVMSSDFAIGQFRFLQRLVLVHGRWSYRRLAETISNFFYKNMIWTWSIFWYQCYCNFDIAYIFEYTYILMFNLFFTSVPVILMGVLDQDVSDTVSLAVPQLYRRGIERKEWTQTKFWLYMIDGVYQSVMSFFIPFIFVVLTPTAAGNGLDVSERTRLGAYIAHPAVITINGYILINTYRWDWLMLLSIVLSDVFIFFWTGVYTATTYSAGFYQAAPQVYQELTFWMCLIVTPALCLLPRLVVKCIQKQRFPYDVDIIREQANRGDFAAADAAAVAALGGPERVEGESLGSLSSSGKGSGRSKKSKHQQYASVDEDRRPIYPPSIATHNTRAQNGSDGTTYIMQSRTSTELQQEMPFDRDREEETPAVRPSIERTRPSYDRIRRSIDRVRPSFEASNDFTSAARLSRIESTHSSLGHTYSHQRESYAGESSGAQQGQEPGQRRFNLATVRKRGLSAFSKKSIDTTEGEPPREPPM.

Residues 1 to 85 (MAPPQEEGGG…SSNNGGSAPR (85 aa)) are disordered. The Cytoplasmic portion of the chain corresponds to 1-134 (MAPPQEEGGG…PKNLWFQFHN (134 aa)). A compositionally biased stretch (basic residues) spans 22 to 37 (WATRRLTVKSGARKRL). The segment covering 72 to 82 (GSISSSNNGGS) has biased composition (low complexity). Residues 135–155 (IANIFFLFLVILVIFPIFGGV) traverse the membrane as a helical segment. A topological domain (extracellular) is located at residue Asn-156. A helical membrane pass occupies residues 157–177 (PGLNSVPLIVIITVTAIKDAI). Residues 178-491 (EDYRRTILDI…ARIARELNFN (314 aa)) are Cytoplasmic-facing. Residues 257–288 (TRTAPWDPSHRRSVASHTEEIQMTPVPSPVPH) are disordered. Residues 492–512 (VICNFGILLIMCLIAAIANGI) form a helical membrane-spanning segment. Residues 513-537 (AWGKTDASLAWFEYGSIGGTPALTG) are Extracellular-facing. Residues 538 to 558 (FITFWAAVIVFQNLVPISLYI) traverse the membrane as a helical segment. At 559 to 1123 (SLEIVRTLQA…TISNFFYKNM (565 aa)) the chain is on the cytoplasmic side. Catalysis depends on Asp-606, which acts as the 4-aspartylphosphate intermediate. Residues Asp-606, Lys-607, Thr-608, Glu-740, Phe-781, Ser-783, Lys-786, Lys-804, Arg-839, Thr-840, Thr-919, Gly-920, Asp-921, Arg-1031, and Lys-1037 each coordinate ATP. A Mg(2+)-binding site is contributed by Asp-606. Thr-608 contacts Mg(2+). Asp-1057 is a binding site for Mg(2+). Positions 1060 and 1061 each coordinate ATP. Asp-1061 contacts Mg(2+). Residues 1124 to 1144 (IWTWSIFWYQCYCNFDIAYIF) form a helical membrane-spanning segment. Over 1145-1146 (EY) the chain is Extracellular. Residues 1147 to 1167 (TYILMFNLFFTSVPVILMGVL) form a helical membrane-spanning segment. Residues 1168–1200 (DQDVSDTVSLAVPQLYRRGIERKEWTQTKFWLY) are Cytoplasmic-facing. A helical membrane pass occupies residues 1201–1221 (MIDGVYQSVMSFFIPFIFVVL). The Extracellular portion of the chain corresponds to 1222–1237 (TPTAAGNGLDVSERTR). A helical membrane pass occupies residues 1238–1258 (LGAYIAHPAVITINGYILINT). Residues 1259 to 1262 (YRWD) are Cytoplasmic-facing. The helical transmembrane segment at 1263-1283 (WLMLLSIVLSDVFIFFWTGVY) threads the bilayer. The Extracellular segment spans residues 1284-1302 (TATTYSAGFYQAAPQVYQE). A helical transmembrane segment spans residues 1303–1323 (LTFWMCLIVTPALCLLPRLVV). Arg-1320 provides a ligand contact to a 1,2-diacyl-sn-glycero-3-phospho-L-serine. At 1324–1555 (KCIQKQRFPY…EGEPPREPPM (232 aa)) the chain is on the cytoplasmic side. 2 disordered regions span residues 1364 to 1456 (VEGE…ERTR) and 1489 to 1555 (ESTH…EPPM). Over residues 1406-1432 (ATHNTRAQNGSDGTTYIMQSRTSTELQ) the composition is skewed to polar residues. 2 stretches are compositionally biased toward basic and acidic residues: residues 1436 to 1456 (PFDR…ERTR) and 1540 to 1555 (KSID…EPPM).

The protein belongs to the cation transport ATPase (P-type) (TC 3.A.3) family. Type IV subfamily. Component of a flippase complex consisting of DNF1 and CDC50. Interacts with CDC50; the interaction is direct. Mg(2+) serves as cofactor.

It localises to the cell membrane. Its subcellular location is the endosome membrane. It is found in the golgi apparatus. The protein localises to the trans-Golgi network membrane. It catalyses the reaction ATP + H2O + phospholipidSide 1 = ADP + phosphate + phospholipidSide 2.. The catalysed reaction is a 1,2-diacyl-sn-glycero-3-phosphoethanolamine(out) + ATP + H2O = a 1,2-diacyl-sn-glycero-3-phosphoethanolamine(in) + ADP + phosphate + H(+). It carries out the reaction a 1,2-diacyl-sn-glycero-3-phosphocholine(out) + ATP + H2O = a 1,2-diacyl-sn-glycero-3-phosphocholine(in) + ADP + phosphate + H(+). The enzyme catalyses a beta-D-glucosyl-(1&lt;-&gt;1')-N-acylsphing-4-enine(out) + ATP + H2O = a beta-D-glucosyl-(1&lt;-&gt;1')-N-acylsphing-4-enine(in) + ADP + phosphate + H(+). It catalyses the reaction a 1,2-diacyl-sn-glycero-3-phospho-L-serine(out) + ATP + H2O = a 1,2-diacyl-sn-glycero-3-phospho-L-serine(in) + ADP + phosphate + H(+). Functionally, catalytic component of a P4-ATPase flippase complex which catalyzes the hydrolysis of ATP coupled to the transport of phosphatidylcholine and phosphatidylserine from the lumenal to the cytosolic leaflet of membranes and ensures the maintenance of asymmetric distribution of phospholipids. May also transport glucosylceramide and phosphatidylethanolamine. The chain is Phospholipid-transporting ATPase DNF1 from Chaetomium thermophilum (strain DSM 1495 / CBS 144.50 / IMI 039719) (Thermochaetoides thermophila).